Reading from the N-terminus, the 210-residue chain is Thiamine-phosphate synthase (210 aa).

4-amino-2-methyl-5-(diphosphooxymethyl)pyrimidine-binding positions include 39 to 43 (QLREK) and Asn-71. Mg(2+) is bound by residues Asp-72 and Asp-91. Ser-110 lines the 4-amino-2-methyl-5-(diphosphooxymethyl)pyrimidine pocket. Residue 134 to 136 (TPT) participates in 2-[(2R,5Z)-2-carboxy-4-methylthiazol-5(2H)-ylidene]ethyl phosphate binding. Lys-137 provides a ligand contact to 4-amino-2-methyl-5-(diphosphooxymethyl)pyrimidine. Gly-163 is a binding site for 2-[(2R,5Z)-2-carboxy-4-methylthiazol-5(2H)-ylidene]ethyl phosphate.

It belongs to the thiamine-phosphate synthase family. Mg(2+) is required as a cofactor.

It carries out the reaction 2-[(2R,5Z)-2-carboxy-4-methylthiazol-5(2H)-ylidene]ethyl phosphate + 4-amino-2-methyl-5-(diphosphooxymethyl)pyrimidine + 2 H(+) = thiamine phosphate + CO2 + diphosphate. The catalysed reaction is 2-(2-carboxy-4-methylthiazol-5-yl)ethyl phosphate + 4-amino-2-methyl-5-(diphosphooxymethyl)pyrimidine + 2 H(+) = thiamine phosphate + CO2 + diphosphate. The enzyme catalyses 4-methyl-5-(2-phosphooxyethyl)-thiazole + 4-amino-2-methyl-5-(diphosphooxymethyl)pyrimidine + H(+) = thiamine phosphate + diphosphate. It participates in cofactor biosynthesis; thiamine diphosphate biosynthesis; thiamine phosphate from 4-amino-2-methyl-5-diphosphomethylpyrimidine and 4-methyl-5-(2-phosphoethyl)-thiazole: step 1/1. Condenses 4-methyl-5-(beta-hydroxyethyl)thiazole monophosphate (THZ-P) and 2-methyl-4-amino-5-hydroxymethyl pyrimidine pyrophosphate (HMP-PP) to form thiamine monophosphate (TMP). The sequence is that of Thiamine-phosphate synthase from Campylobacter jejuni (strain RM1221).